Consider the following 723-residue polypeptide: Probable inactive serine/threonine-protein kinase fnkD (723 aa).

The Protein kinase domain maps to 33 to 276; sequence WEIITQLESN…TTSLPKYSTL (244 aa). FNIP repeat units follow at residues 301 to 342, 343 to 384, 385 to 426, 524 to 565, 566 to 606, and 647 to 690; these read FNQP…ELAS, FNQT…LLSS, FNQP…SLAS, FNQS…ILPS, FNHP…LGDE, and FNIE…FGIT.

This sequence belongs to the protein kinase superfamily. STE Ser/Thr protein kinase family.

The sequence is that of Probable inactive serine/threonine-protein kinase fnkD (fnkD-1) from Dictyostelium discoideum (Social amoeba).